A 301-amino-acid chain; its full sequence is 4-hydroxy-tetrahydrodipicolinate synthase (301 aa).

Pyruvate is bound at residue threonine 57. The Proton donor/acceptor role is filled by tyrosine 143. Lysine 171 serves as the catalytic Schiff-base intermediate with substrate. Isoleucine 211 contributes to the pyruvate binding site.

This sequence belongs to the DapA family. As to quaternary structure, homotetramer; dimer of dimers.

Its subcellular location is the cytoplasm. It catalyses the reaction L-aspartate 4-semialdehyde + pyruvate = (2S,4S)-4-hydroxy-2,3,4,5-tetrahydrodipicolinate + H2O + H(+). It participates in amino-acid biosynthesis; L-lysine biosynthesis via DAP pathway; (S)-tetrahydrodipicolinate from L-aspartate: step 3/4. Its function is as follows. Catalyzes the condensation of (S)-aspartate-beta-semialdehyde [(S)-ASA] and pyruvate to 4-hydroxy-tetrahydrodipicolinate (HTPA). In Bifidobacterium longum (strain DJO10A), this protein is 4-hydroxy-tetrahydrodipicolinate synthase.